The sequence spans 1155 residues: uncharacterized protein (1155 aa).

An N-terminal signal peptide occupies residues 1 to 19 (MKKNIFITSLLILLLLLSS). A lipid anchor (N-palmitoyl cysteine) is attached at cysteine 20. Cysteine 20 carries the S-diacylglycerol cysteine lipid modification. 4 helical membrane-spanning segments follow: residues 289–309 (ISVSAILTLYIMFTVLSFLIG), 395–415 (LGFIYIILYLIALYFIFFLIF), 424–444 (ALITIGMIIIMGPIFICFMLF), and 459–479 (ISYALQPIILFAGIAFISMII).

It belongs to the TrbL/VirB6 family.

It is found in the cell membrane. This is an uncharacterized protein from Rickettsia prowazekii (strain Madrid E).